A 266-amino-acid chain; its full sequence is Glucosamine-6-phosphate deaminase (266 aa).

Asp-72 acts as the Proton acceptor; for enolization step in catalysis. Catalysis depends on Asp-141, which acts as the For ring-opening step. Catalysis depends on His-143, which acts as the Proton acceptor; for ring-opening step. The For ring-opening step role is filled by Glu-148.

The protein belongs to the glucosamine/galactosamine-6-phosphate isomerase family. NagB subfamily. As to quaternary structure, homohexamer.

The enzyme catalyses alpha-D-glucosamine 6-phosphate + H2O = beta-D-fructose 6-phosphate + NH4(+). It functions in the pathway amino-sugar metabolism; N-acetylneuraminate degradation; D-fructose 6-phosphate from N-acetylneuraminate: step 5/5. Its activity is regulated as follows. Allosterically activated by N-acetylglucosamine 6-phosphate (GlcNAc6P). Catalyzes the reversible isomerization-deamination of glucosamine 6-phosphate (GlcN6P) to form fructose 6-phosphate (Fru6P) and ammonium ion. The polypeptide is Glucosamine-6-phosphate deaminase (Salmonella typhimurium (strain LT2 / SGSC1412 / ATCC 700720)).